The sequence spans 366 residues: Erythronate-4-phosphate dehydrogenase (366 aa).

2 residues coordinate substrate: Ser-46 and Thr-67. The NAD(+) site is built by Asp-147 and Thr-175. Arg-208 is an active-site residue. Position 228 (Asp-228) interacts with NAD(+). The active site involves Glu-233. Catalysis depends on His-250, which acts as the Proton donor. Position 253 (Gly-253) interacts with NAD(+). Tyr-254 is a binding site for substrate.

This sequence belongs to the D-isomer specific 2-hydroxyacid dehydrogenase family. PdxB subfamily. As to quaternary structure, homodimer.

The protein localises to the cytoplasm. It catalyses the reaction 4-phospho-D-erythronate + NAD(+) = (R)-3-hydroxy-2-oxo-4-phosphooxybutanoate + NADH + H(+). It participates in cofactor biosynthesis; pyridoxine 5'-phosphate biosynthesis; pyridoxine 5'-phosphate from D-erythrose 4-phosphate: step 2/5. Catalyzes the oxidation of erythronate-4-phosphate to 3-hydroxy-2-oxo-4-phosphonooxybutanoate. The protein is Erythronate-4-phosphate dehydrogenase of Coxiella burnetii (strain Dugway 5J108-111).